The following is a 68-amino-acid chain: Phylloseptin-SP1 (68 aa).

Residues 1 to 22 form the signal peptide; it reads MAFLKKSLFLVLFLGLVSLSIC. Residues 23-45 constitute a propeptide that is removed on maturation; it reads EEKERETKEEENEQEDDNREEKR. A Leucine amide modification is found at leucine 67.

Expressed by the skin glands.

The protein localises to the secreted. In terms of biological role, weak cationic amphipathic alpha-helical antimicrobial peptide with weak activity against Gram-positive and Gram-negative bacteria and fungi. Has been tested against E.coli (MIC&gt;217.69 uM), S.aureus (MIC&gt;217.69 uM), K.pneumoniae (MIC&gt;189.00 uM) and C.albicans (MIC&gt;217.69 uM). Shows a moderate hemolytic activity. The chain is Phylloseptin-SP1 from Agalychnis spurrelli (Gliding leaf frog).